A 115-amino-acid polypeptide reads, in one-letter code: Mediator of RNA polymerase II transcription subunit 9 (115 aa).

The disordered stretch occupies residues 1–31 (MATGGTVRPAEEPEEEEEEEDEAVEEEEEED). The segment covering 12-31 (EPEEEEEEEDEAVEEEEEED) has biased composition (acidic residues). Positions 31-107 (DYTFLPLVHD…SELLQKYKSL (77 aa)) form a coiled coil.

This sequence belongs to the Mediator complex subunit 9 family. Component of the Mediator complex.

Its subcellular location is the nucleus. Functionally, component of the Mediator complex, a coactivator involved in the regulated transcription of nearly all RNA polymerase II-dependent genes. Mediator functions as a bridge to convey information from gene-specific regulatory proteins to the basal RNA polymerase II transcription machinery. Mediator is recruited to promoters by direct interactions with regulatory proteins and serves as a scaffold for the assembly of a functional preinitiation complex with RNA polymerase II and the general transcription factors. The sequence is that of Mediator of RNA polymerase II transcription subunit 9 (med9) from Xenopus laevis (African clawed frog).